We begin with the raw amino-acid sequence, 178 residues long: ATP synthase subunit b (178 aa).

A helical membrane pass occupies residues 11–31 (IIPEPVEIVVGLVAFLLLLFV).

The protein belongs to the ATPase B chain family. F-type ATPases have 2 components, F(1) - the catalytic core - and F(0) - the membrane proton channel. F(1) has five subunits: alpha(3), beta(3), gamma(1), delta(1), epsilon(1). F(0) has three main subunits: a(1), b(2) and c(10-14). The alpha and beta chains form an alternating ring which encloses part of the gamma chain. F(1) is attached to F(0) by a central stalk formed by the gamma and epsilon chains, while a peripheral stalk is formed by the delta and b chains.

It localises to the cell membrane. Functionally, f(1)F(0) ATP synthase produces ATP from ADP in the presence of a proton or sodium gradient. F-type ATPases consist of two structural domains, F(1) containing the extramembraneous catalytic core and F(0) containing the membrane proton channel, linked together by a central stalk and a peripheral stalk. During catalysis, ATP synthesis in the catalytic domain of F(1) is coupled via a rotary mechanism of the central stalk subunits to proton translocation. In terms of biological role, component of the F(0) channel, it forms part of the peripheral stalk, linking F(1) to F(0). The protein is ATP synthase subunit b of Saccharopolyspora erythraea (strain ATCC 11635 / DSM 40517 / JCM 4748 / NBRC 13426 / NCIMB 8594 / NRRL 2338).